We begin with the raw amino-acid sequence, 274 residues long: Outer surface protein A (274 aa).

Positions 1-16 are cleaved as a signal peptide; sequence MKKYLLGIGLILALIA. Residue C17 is the site of N-palmitoyl cysteine attachment. The S-diacylglycerol cysteine moiety is linked to residue C17.

It belongs to the OspA lipoprotein family.

Its subcellular location is the cell outer membrane. It localises to the cell surface. The protein is Outer surface protein A of Borreliella burgdorferi (Lyme disease spirochete).